We begin with the raw amino-acid sequence, 159 residues long: 2-C-methyl-D-erythritol 2,4-cyclodiphosphate synthase (159 aa).

Residues Asp10 and His12 each contribute to the a divalent metal cation site. 4-CDP-2-C-methyl-D-erythritol 2-phosphate-binding positions include 10-12 and 37-38; these read DVH and HS. An a divalent metal cation-binding site is contributed by His45. 4-CDP-2-C-methyl-D-erythritol 2-phosphate-binding positions include 59–61, 64–68, 103–109, 135–138, Phe142, and Arg145; these read DIG, FLDTD, AQAPKML, and TTTE.

The protein belongs to the IspF family. In terms of assembly, homotrimer. Requires a divalent metal cation as cofactor.

The catalysed reaction is 4-CDP-2-C-methyl-D-erythritol 2-phosphate = 2-C-methyl-D-erythritol 2,4-cyclic diphosphate + CMP. It participates in isoprenoid biosynthesis; isopentenyl diphosphate biosynthesis via DXP pathway; isopentenyl diphosphate from 1-deoxy-D-xylulose 5-phosphate: step 4/6. Its function is as follows. Involved in the biosynthesis of isopentenyl diphosphate (IPP) and dimethylallyl diphosphate (DMAPP), two major building blocks of isoprenoid compounds. Catalyzes the conversion of 4-diphosphocytidyl-2-C-methyl-D-erythritol 2-phosphate (CDP-ME2P) to 2-C-methyl-D-erythritol 2,4-cyclodiphosphate (ME-CPP) with a corresponding release of cytidine 5-monophosphate (CMP). The polypeptide is 2-C-methyl-D-erythritol 2,4-cyclodiphosphate synthase (Francisella tularensis subsp. holarctica (strain FTNF002-00 / FTA)).